We begin with the raw amino-acid sequence, 362 residues long: Atypical chemokine receptor 3 (362 aa).

Residues 1–40 (MDLHLFDYSEPGNFSDISWPCNSSDCIVVDTVMCPNMPNK) lie on the Extracellular side of the membrane. N-linked (GlcNAc...) asparagine glycosylation is found at asparagine 13, asparagine 22, and asparagine 39. Residues 41–61 (SVLLYTLSFIYIFIFVIGMIA) form a helical membrane-spanning segment. At 62–81 (NSVVVWVNIQAKTTGYDTHC) the chain is on the cytoplasmic side. The chain crosses the membrane as a helical span at residues 82-102 (YILNLAIADLWVVLTIPVWVV). Residues 103–118 (SLVQHNQWPMGELTCK) lie on the Extracellular side of the membrane. A disulfide bond links cysteine 117 and cysteine 196. A helical transmembrane segment spans residues 119-139 (VTHLIFSINLFGSIFFLTCMS). Topologically, residues 140 to 162 (VDRYLSITYFTNTPSSRKKMVRR) are cytoplasmic. The chain crosses the membrane as a helical span at residues 163–183 (VVCILVWLLAFCVSLPDTYYL). The Extracellular segment spans residues 184 to 213 (KTVTSASNNETYCRSFYPEHSIKEWLIGME). The chain crosses the membrane as a helical span at residues 214-234 (LVSVVLGFAVPFSIIAVFYFL). Over 235 to 252 (LARAISASSDQEKHSSRK) the chain is Cytoplasmic. Residues 253–273 (IIFSYVVVFLVCWLPYHVAVL) traverse the membrane as a helical segment. Residues 274–296 (LDIFSILHYIPFTCRLEHALFTA) are Extracellular-facing. Residues 297 to 319 (LHVTQCLSLVHCCVNPVLYSFIN) form a helical membrane-spanning segment. At 320-362 (RNYRYELMKAFIFKYSAKTGLTKLIDASRVSETEYSALEQSTK) the chain is on the cytoplasmic side. The tract at residues 324–362 (YELMKAFIFKYSAKTGLTKLIDASRVSETEYSALEQSTK) is C-terminal cytoplasmic tail. Residues serine 347, serine 350, and serine 355 each carry the phosphoserine modification.

It belongs to the G-protein coupled receptor 1 family. Atypical chemokine receptor subfamily. In terms of assembly, homodimer. Can form heterodimers with CXCR4; heterodimerization may regulate CXCR4 signaling activity. Interacts with ARRB1 and ARRB2. In terms of processing, the Ser/Thr residues in the C-terminal cytoplasmic tail may be phosphorylated. Ubiquitinated at the Lys residues in its C-terminal cytoplasmic tail and is essential for correct trafficking from and to the cell membrane. Deubiquitinated by CXCL12-stimulation in a reversible manner. As to expression, expressed in monocytes, basophils, B-cells, umbilical vein endothelial cells (HUVEC) and B-lymphoblastoid cells. Lower expression detected in CD4+ T-lymphocytes and natural killer cells. In the brain, detected in endothelial cells and capillaries, and in mature neurons of the frontal cortex and hippocampus. Expressed in tubular formation in the kidney. Highly expressed in astroglial tumor endothelial, microglial and glioma cells. Expressed at low levels in normal CD34+ progenitor cells, but at very high levels in several myeloid malignant cell lines. Expressed in breast carcinomas but not in normal breast tissue (at protein level).

Its subcellular location is the cell membrane. The protein localises to the early endosome. It is found in the recycling endosome. Functionally, atypical chemokine receptor that controls chemokine levels and localization via high-affinity chemokine binding that is uncoupled from classic ligand-driven signal transduction cascades, resulting instead in chemokine sequestration, degradation, or transcytosis. Also known as interceptor (internalizing receptor) or chemokine-scavenging receptor or chemokine decoy receptor. Acts as a receptor for chemokines CXCL11 and CXCL12/SDF1. Chemokine binding does not activate G-protein-mediated signal transduction but instead induces beta-arrestin recruitment, leading to ligand internalization and activation of MAPK signaling pathway. Required for regulation of CXCR4 protein levels in migrating interneurons, thereby adapting their chemokine responsiveness. In glioma cells, transduces signals via MEK/ERK pathway, mediating resistance to apoptosis. Promotes cell growth and survival. Not involved in cell migration, adhesion or proliferation of normal hematopoietic progenitors but activated by CXCL11 in malignant hemapoietic cells, leading to phosphorylation of ERK1/2 (MAPK3/MAPK1) and enhanced cell adhesion and migration. Plays a regulatory role in CXCR4-mediated activation of cell surface integrins by CXCL12. Required for heart valve development. Regulates axon guidance in the oculomotor system through the regulation of CXCL12 levels. Its function is as follows. (Microbial infection) Acts as a coreceptor with CXCR4 for a restricted number of HIV isolates. The sequence is that of Atypical chemokine receptor 3 from Homo sapiens (Human).